The chain runs to 124 residues: Glycine cleavage system H protein (124 aa).

Residues 22-104 (LVITGITDHA…YGKGWIYKIK (83 aa)) enclose the Lipoyl-binding domain. N6-lipoyllysine is present on lysine 63.

This sequence belongs to the GcvH family. In terms of assembly, the glycine cleavage system is composed of four proteins: P, T, L and H. (R)-lipoate serves as cofactor.

Functionally, the glycine cleavage system catalyzes the degradation of glycine. The H protein shuttles the methylamine group of glycine from the P protein to the T protein. The sequence is that of Glycine cleavage system H protein from Acinetobacter baumannii (strain SDF).